The primary structure comprises 375 residues: 4,4'-diaponeurosporenoate glycosyltransferase (375 aa).

4 helical membrane passes run 7-23, 112-132, 280-300, and 333-353; these read LLHA…YLMY, ACYL…DADV, IMML…GLAL, and FSIL…LVYI.

This sequence belongs to the glycosyltransferase 2 family. CrtQ subfamily.

Its subcellular location is the cell membrane. It functions in the pathway carotenoid biosynthesis; staphyloxanthin biosynthesis; staphyloxanthin from farnesyl diphosphate: step 4/5. Functionally, catalyzes the glycosylation of 4,4'-diaponeurosporenoate, i.e. the esterification of glucose at the C1'' position with the carboxyl group of 4,4'-diaponeurosporenic acid, to form glycosyl-4,4'-diaponeurosporenoate. This is a step in the biosynthesis of staphyloxanthin, an orange pigment present in most staphylococci strains. This is 4,4'-diaponeurosporenoate glycosyltransferase (crtQ) from Staphylococcus haemolyticus (strain JCSC1435).